Consider the following 139-residue polypeptide: Mitochondrial intermembrane space import and assembly protein 40 (139 aa).

Disulfide bonds link Cys53-Cys55, Cys64-Cys97, and Cys74-Cys87. A CHCH domain is found at 61-105; it reads SGPCGEQFKSAFSCFHYSQEEIKGSDCLDQFRAMQECMQKYPDIY. Short sequence motifs (cx9C motif) lie at residues 64-74 and 87-97; these read CGEQFKSAFSC and CLDQFRAMQEC. A disordered region spans residues 102–139; it reads PDIYPQEDDEDEAEKEKQNKEAEAFSTETSDTKEESSS. Residues 115 to 124 show a composition bias toward basic and acidic residues; the sequence is EKEKQNKEAE.

Monomer. Can form homooligomers.

The protein resides in the mitochondrion intermembrane space. Functionally, central component of a redox-sensitive mitochondrial intermembrane space import machinery which is required for the biogenesis of respiratory chain complexes. Functions as chaperone and catalyzes the formation of disulfide bonds in substrate proteins, such as COX17 or MICU1. Required for the import and folding of small cysteine-containing proteins (small Tim) in the mitochondrial intermembrane space (IMS). Precursor proteins to be imported into the IMS are translocated in their reduced form into the mitochondria. This Xenopus tropicalis (Western clawed frog) protein is Mitochondrial intermembrane space import and assembly protein 40 (chchd4).